The primary structure comprises 436 residues: Enolase (436 aa).

Gln-167 lines the (2R)-2-phosphoglycerate pocket. The active-site Proton donor is Glu-209. Residues Asp-246, Glu-291, and Asp-318 each coordinate Mg(2+). (2R)-2-phosphoglycerate-binding residues include Lys-343, Arg-372, Ser-373, and Lys-394. Catalysis depends on Lys-343, which acts as the Proton acceptor.

The protein belongs to the enolase family. As to quaternary structure, component of the RNA degradosome, a multiprotein complex involved in RNA processing and mRNA degradation. It depends on Mg(2+) as a cofactor.

It is found in the cytoplasm. Its subcellular location is the secreted. The protein resides in the cell surface. It carries out the reaction (2R)-2-phosphoglycerate = phosphoenolpyruvate + H2O. Its pathway is carbohydrate degradation; glycolysis; pyruvate from D-glyceraldehyde 3-phosphate: step 4/5. Functionally, catalyzes the reversible conversion of 2-phosphoglycerate (2-PG) into phosphoenolpyruvate (PEP). It is essential for the degradation of carbohydrates via glycolysis. This Haemophilus influenzae (strain ATCC 51907 / DSM 11121 / KW20 / Rd) protein is Enolase.